Consider the following 236-residue polypeptide: Virion protein US10 homolog (236 aa).

Residues Met-1 to Asp-32 are disordered. The span at Ser-21 to Ala-31 shows a compositional bias: gly residues. The segment at Cys-138–Cys-150 is a zinc-finger region.

The protein belongs to the herpesviridae US10 family. Post-translationally, phosphorylated.

The protein localises to the virion tegument. It localises to the host nucleus matrix. This is Virion protein US10 homolog from Equine herpesvirus 1 (strain Ab4p) (EHV-1).